Here is a 782-residue protein sequence, read N- to C-terminus: MLSLYEKIKIRLIILFLLAALSFIGLFFIINYQLVSERAVKRADSRFELIQKNVGYFFKDIERSALTLKDSLYLLKNTEEIQRAVILKMEMMPFLDSVGLVLDDNKYYLFSRRANDKIVVYHQEQVNGPLVDESGRVIFADFNPSKRPWSVASDDSNNSWNPAYNCFDRPGKKCISFTLHINGKDHDLLAVDKIHVDLNWRYLNEYLDQISANDEVLFLKQGHEIIAKNQLAREKLIIYNSEGNYNIIDSVDTEYIEKTSAVPNNALFEIYFYYPGGNLLNASDKLFYLPFAFIIIVLLVVYLMTTRVFRRQFSEMTELVNTLAFLPDSTDQIEALKIREGDAKEIISIKNSIAEMKDAEIERSNKLLSLISYDQESGFIKNMAIIESNNNQYLAVGIIKLCGLEAVEAVFGVDERNKIVRKLCQRIAEKYAQCCDIVTFNADLYLLLCRENVQTFTRKIAMVNDFDSSFGYRNLRIHKSAICEPLQGENAWSYAEKLKLAISSIRDHMFSEFIFCDDAKLNEIEENIWIARNIRHAMEIGELFLVYQPIVDINTRAILGAEALCRWVSAERGIISPLKFITIAEDIGFINELGYQIIKTAMGEFRHFSQRASLKDDFLLHINVSPWQLNEPHFHERFTTIMKENGLKANSLCVEITETVIERINEHFYLNIEQLRKQGVRISIDDFGTGLSNLKRFYEINPDSIKVDSQFTGDIFGTAGKIVRIIFDLARYNRIPVIAEGVESEDVARELIKLGCVQAQGYLYQKPMPFSAWDKSGKLVKE.

Helical transmembrane passes span Leu12–Tyr32 and Leu286–Thr306. Residues Asn527–Lys781 form the EAL domain.

The protein localises to the cell membrane. It carries out the reaction 3',3'-c-di-GMP + H2O = 5'-phosphoguanylyl(3'-&gt;5')guanosine + H(+). Functionally, phosphodiesterase (PDE) that catalyzes the hydrolysis of cyclic-di-GMP (c-di-GMP) to 5'-pGpG. Overexpression reduces biofilm formation. Cyclic-di-GMP is a second messenger which controls cell surface-associated traits in bacteria. The sequence is that of Probable cyclic di-GMP phosphodiesterase PdeI from Escherichia coli (strain K12).